A 205-amino-acid chain; its full sequence is Probable GTP-binding protein EngB (205 aa).

The EngB-type G domain occupies 27–201 (QGMEVAFAGR…QNKLNAWFSG (175 aa)). GTP contacts are provided by residues 35–42 (GRSNAGKS), 62–66 (GRTQL), 80–83 (DLPG), 147–150 (TKVD), and 180–182 (FSS). Residues Ser42 and Thr64 each coordinate Mg(2+).

Belongs to the TRAFAC class TrmE-Era-EngA-EngB-Septin-like GTPase superfamily. EngB GTPase family. Mg(2+) serves as cofactor.

Functionally, necessary for normal cell division and for the maintenance of normal septation. This chain is Probable GTP-binding protein EngB, found in Hamiltonella defensa subsp. Acyrthosiphon pisum (strain 5AT).